The chain runs to 333 residues: Protein pelota homolog (333 aa).

This sequence belongs to the eukaryotic release factor 1 family. Pelota subfamily. As to quaternary structure, monomer. The cofactor is a divalent metal cation.

It is found in the cytoplasm. May function in recognizing stalled ribosomes, interact with stem-loop structures in stalled mRNA molecules, and effect endonucleolytic cleavage of the mRNA. May play a role in the release non-functional ribosomes and degradation of damaged mRNAs. Has endoribonuclease activity. The chain is Protein pelota homolog from Pyrobaculum arsenaticum (strain DSM 13514 / JCM 11321 / PZ6).